A 169-amino-acid chain; its full sequence is Benzoate 1,2-dioxygenase subunit beta (169 aa).

This sequence belongs to the bacterial ring-hydroxylating dioxygenase beta subunit family. In terms of assembly, this dioxygenase system consists of three proteins: the two subunits of the hydroxylase (BenA and BenB), and an electron transfer component (BenC).

The enzyme catalyses benzoate + NADH + O2 + H(+) = (1R,6S)-1,6-dihydroxycyclohexa-2,4-diene-1-carboxylate + NAD(+). The protein operates within aromatic compound metabolism; benzoate degradation via hydroxylation; catechol from benzoate: step 1/2. Degradation of benzoate to 2-hydro-1,2-dihydroxybenzoate (DHB). The beta subunit may be responsible for the substrate specificity of the enzyme. The sequence is that of Benzoate 1,2-dioxygenase subunit beta (benB) from Acinetobacter baylyi (strain ATCC 33305 / BD413 / ADP1).